Consider the following 387-residue polypeptide: Calcium sensing receptor, chloroplastic (387 aa).

Residues 1 to 33 (MAMAEMATKSSLSAKLTLPSSSTKKTLSLRQVS) constitute a chloroplast transit peptide. At 34-186 (VSLPTSTSIS…TMDTISSADP (153 aa)) the chain is on the lumenal, thylakoid side. The chain crosses the membrane as a helical span at residues 187 to 207 (SVIVVAAGAAFLAYLLLPPVF). At 208–387 (SAISFNFRGY…SGTKFLPSSD (180 aa)) the chain is on the stromal side. In terms of domain architecture, Rhodanese spans 231–352 (CTKNYLMVDI…WLQSRLGTDS (122 aa)). A Phosphothreonine modification is found at Thr380.

Post-translationally, phosphorylation seems to be light-dependent. In terms of tissue distribution, predominantly expressed in the shoot, including guard cells.

It localises to the plastid. Its subcellular location is the chloroplast thylakoid membrane. Modulates cytoplasmic Ca(2+) concentration and is crucial for proper stomatal regulation in response to elevated levels of external Ca(2+). May function by regulating concentrations of inositol 1,4,5-trisphosphate (IP3), which in turn triggers release of Ca(2+) from internal stores. May play a role in de-etiolation. This Arabidopsis thaliana (Mouse-ear cress) protein is Calcium sensing receptor, chloroplastic (CAS).